A 213-amino-acid polypeptide reads, in one-letter code: ER lumen protein-retaining receptor erd-2.1 (213 aa).

Residues 1-2 (MN) are Lumenal-facing. A helical transmembrane segment spans residues 3–21 (LFRFTADVAHAIAIVVLLL). At 22–35 (KIWKSRSCEGISGR) the chain is on the cytoplasmic side. Residues 36-53 (SQLLFALVFVTRYLDLFT) traverse the membrane as a helical segment. The Lumenal segment spans residues 54 to 61 (NFFSFYNT). A helical membrane pass occupies residues 62–80 (AMKIFYLVASFGTVYLMWA). The Cytoplasmic portion of the chain corresponds to 81–96 (KFKATYDRNNDSFRIE). Residues 97–110 (FLVIPSMILALLIN) form a helical membrane-spanning segment. The Lumenal portion of the chain corresponds to 111–117 (HEFIFME). The helical transmembrane segment at 118–137 (VMWTFSIYLEAVAIMPQLFM) threads the bilayer. The Cytoplasmic segment spans residues 138–149 (LSRTGNAETITA). The chain crosses the membrane as a helical span at residues 150 to 168 (HYLFALGSYRFLYILNWVY). The Lumenal segment spans residues 169-178 (RYYTESFFDP). A helical transmembrane segment spans residues 179–199 (ISVVAGIVQTVLYADFFYLYI). Over 200–213 (TRVIQSNRQFEMSA) the chain is Cytoplasmic.

It belongs to the ERD2 family.

The protein localises to the endoplasmic reticulum membrane. Its function is as follows. Required for the retention of luminal endoplasmic reticulum proteins. Determines the specificity of the luminal ER protein retention system. Also required for normal vesicular traffic through the Golgi. The protein is ER lumen protein-retaining receptor erd-2.1 of Caenorhabditis elegans.